The primary structure comprises 813 residues: Valine--tRNA ligase (813 aa).

The short motif at 46–56 is the 'HIGH' region element; sequence PTVSGQLHIGH. The 'KMSKS' region signature appears at 536 to 540; sequence KMSKS. Position 539 (Lys539) interacts with ATP.

Belongs to the class-I aminoacyl-tRNA synthetase family. ValS type 2 subfamily. As to quaternary structure, monomer.

It localises to the cytoplasm. The enzyme catalyses tRNA(Val) + L-valine + ATP = L-valyl-tRNA(Val) + AMP + diphosphate. Catalyzes the attachment of valine to tRNA(Val). As ValRS can inadvertently accommodate and process structurally similar amino acids such as threonine, to avoid such errors, it has a 'posttransfer' editing activity that hydrolyzes mischarged Thr-tRNA(Val) in a tRNA-dependent manner. The sequence is that of Valine--tRNA ligase from Rickettsia canadensis (strain McKiel).